Here is a 464-residue protein sequence, read N- to C-terminus: Synaptosomal-associated protein 47 (464 aa).

A disordered region spans residues 20-42 (GRLWDSSGVPQRQKRPGPWRTQT). 2 consecutive t-SNARE coiled-coil homology domains span residues 154–216 (VADA…LTEL) and 401–463 (TSLP…MKRL).

The protein belongs to the SVAP1 family. In terms of assembly, forms a complex containing SNAP47, VAMP2 and STX1A. Associates with the BLOC-1 complex. Interacts with BLOC1S6.

It localises to the endomembrane system. The protein resides in the cytoplasm. It is found in the perinuclear region. Plays a role in intracellular membrane fusion. This chain is Synaptosomal-associated protein 47 (SNAP47), found in Homo sapiens (Human).